Reading from the N-terminus, the 300-residue chain is 4-hydroxy-tetrahydrodipicolinate synthase (300 aa).

Thr55 serves as a coordination point for pyruvate. The active-site Proton donor/acceptor is Tyr143. Lys171 acts as the Schiff-base intermediate with substrate in catalysis. Ile211 lines the pyruvate pocket.

Belongs to the DapA family. Homotetramer; dimer of dimers.

The protein resides in the cytoplasm. It catalyses the reaction L-aspartate 4-semialdehyde + pyruvate = (2S,4S)-4-hydroxy-2,3,4,5-tetrahydrodipicolinate + H2O + H(+). The protein operates within amino-acid biosynthesis; L-lysine biosynthesis via DAP pathway; (S)-tetrahydrodipicolinate from L-aspartate: step 3/4. Catalyzes the condensation of (S)-aspartate-beta-semialdehyde [(S)-ASA] and pyruvate to 4-hydroxy-tetrahydrodipicolinate (HTPA). The polypeptide is 4-hydroxy-tetrahydrodipicolinate synthase (Mycolicibacterium paratuberculosis (strain ATCC BAA-968 / K-10) (Mycobacterium paratuberculosis)).